A 414-amino-acid polypeptide reads, in one-letter code: Arrestin domain-containing protein 3 (414 aa).

2 short sequence motifs (PPxY motif) span residues 346-349 (PPSY) and 391-394 (PPLY). A disordered region spans residues 393 to 414 (LYSEIDPNPDQSSEDRPSCPSR). The span at 405 to 414 (SEDRPSCPSR) shows a compositional bias: basic and acidic residues.

The protein belongs to the arrestin family. Interacts (via PPxY motifs) with NEDD4 (via WW domains). Interacts with ADRB2. Interacts with ADRB3. Interacts with HGS (via PPxY motifs). Does not bind TXN (thioredoxin). Interacts with ITCH. In terms of tissue distribution, detected in visceral fat, subcutaneous fat, brown fat and skeletal muscle, and at lower levels in kidney.

The protein resides in the cytoplasm. It localises to the cell membrane. It is found in the lysosome. The protein localises to the endosome. Its subcellular location is the early endosome. Its function is as follows. Adapter protein that plays a role in regulating cell-surface expression of adrenergic receptors and probably also other G protein-coupled receptors. Plays a role in NEDD4-mediated ubiquitination and endocytosis af activated ADRB2 and subsequent ADRB2 degradation. May recruit NEDD4 to ADRB2. Alternatively, may function as adapter protein that does not play a major role in recruiting NEDD4 to ADRB2, but rather plays a role in a targeting ADRB2 to endosomes. The polypeptide is Arrestin domain-containing protein 3 (Arrdc3) (Mus musculus (Mouse)).